A 136-amino-acid polypeptide reads, in one-letter code: uncharacterized protein (136 aa).

The next 2 membrane-spanning stretches (helical) occupy residues phenylalanine 36–isoleucine 56 and phenylalanine 63–serine 83.

Its subcellular location is the cell membrane. This is an uncharacterized protein from Mycoplasma pneumoniae (strain ATCC 29342 / M129 / Subtype 1) (Mycoplasmoides pneumoniae).